We begin with the raw amino-acid sequence, 111 residues long: C-type lectin lectoxin-Enh2 (111 aa).

A signal peptide spans 1–23 (MGQFTVVSLGLLAMFLSLSGAKG). A disulfide bridge links C26 with C37. Positions 33–108 (RNGVCNKLFP…CASLHPFICQ (76 aa)) constitute a C-type lectin domain. Positions 72–74 (EPN) match the Mannose-binding motif. Ca(2+)-binding residues include E80, N95, and D96. A disulfide bridge connects residues C82 and C99.

Belongs to the true venom lectin family. Expressed by the venom gland.

The protein resides in the secreted. Its function is as follows. Mannose-binding lectin which recognizes specific carbohydrate structures and agglutinates a variety of animal cells by binding to cell-surface glycoproteins and glycolipids. May be a calcium-dependent lectin. The chain is C-type lectin lectoxin-Enh2 from Pseudoferania polylepis (Macleay's water snake).